The following is a 129-amino-acid chain: Small ribosomal subunit protein uS11 (129 aa).

Belongs to the universal ribosomal protein uS11 family. As to quaternary structure, part of the 30S ribosomal subunit. Interacts with proteins S7 and S18. Binds to IF-3.

In terms of biological role, located on the platform of the 30S subunit, it bridges several disparate RNA helices of the 16S rRNA. Forms part of the Shine-Dalgarno cleft in the 70S ribosome. This is Small ribosomal subunit protein uS11 from Halalkalibacterium halodurans (strain ATCC BAA-125 / DSM 18197 / FERM 7344 / JCM 9153 / C-125) (Bacillus halodurans).